The chain runs to 81 residues: Albumin-1 (81 aa).

A propeptide spanning residues 27 to 34 (LSSVAKMI) is cleaved from the precursor.

Three disulfide bonds are probably present. In terms of processing, the C-terminal glycine may be removed from A1b.

In terms of biological role, A1b binds to basic 7S globulin (BG) and stimulates its phosphorylation activity. The sequence is that of Albumin-1 (LEG1) from Lupinus angustifolius (Narrow-leaved blue lupine).